The chain runs to 641 residues: Chaperone protein DnaK (641 aa).

Residue T200 is modified to Phosphothreonine; by autocatalysis. The segment covering A605 to K623 has biased composition (low complexity). Residues A605–D627 form a disordered region.

Belongs to the heat shock protein 70 family.

In terms of biological role, acts as a chaperone. In Xanthomonas oryzae pv. oryzae (strain MAFF 311018), this protein is Chaperone protein DnaK.